Here is a 1565-residue protein sequence, read N- to C-terminus: Major cell-surface adhesin PAc (1565 aa).

An N-terminal signal peptide occupies residues 1 to 38; sequence MKVKKTYGFRKSKISKTLCGAVLGTVAAVSVAGQKVFA. The segment covering 42-54 has biased composition (low complexity); that stretch reads TTTSDVDTKVVGT. The disordered stretch occupies residues 42–81; that stretch reads TTTSDVDTKVVGTQTGNPATNLPEAQGSASKEAEQSQTKL. Positions 72 to 81 are enriched in basic and acidic residues; it reads KEAEQSQTKL. Ag I/II A repeat units follow at residues 146-220, 221-302, 303-384, and 385-466; these read KKTT…QKTN, AANQ…QEAN, AANE…KKAN, and AANE…QKDL. Positions 203–448 are heptad repeats of Y-[EQ]-X-X-L-A-X; it reads EAKLAQYQAD…KRNADAKADY (246 aa). The V-region (lectin-like) stretch occupies residues 461–834; it reads KYQKDLADYP…VNVPKVTKEK (374 aa). Disordered regions lie at residues 827–985 and 1486–1511; these read VPKV…PTPP and NTVKTTTPEDPADPTDPQDPSSPRTS. The P1 repeat unit spans residues 848 to 887; that stretch reads TYETEKPLKPAPVAPNYEKEPTPPTRTPDQAEPNKPTPPT. Residues 888–926 form a P2 repeat; the sequence is YETEKPLEPAPVEPSYEAEPTPPTRTPDQAEPNKPTPPT. One copy of the P3 repeat lies at 927–964; the sequence is YETEKPLEPAPVEPSYEAEPTPPTPTPDQPEPNKPVEP. Over residues 946–961 the composition is skewed to pro residues; sequence PTPPTPTPDQPEPNKP. Residues 1532 to 1536 carry the LPXTG sorting signal motif; sequence LPNTG. The residue at position 1535 (threonine 1535) is a Pentaglycyl murein peptidoglycan amidated threonine. Positions 1536 to 1565 are cleaved as a propeptide — removed by sortase; sequence GVTNNAYMPLLGIIGLVTSFSLLGLKAKKD.

Belongs to the antigen I/II family.

It localises to the secreted. The protein resides in the cell wall. In terms of biological role, surface protein antigen implicated in dental caries. This Streptococcus mutans protein is Major cell-surface adhesin PAc.